We begin with the raw amino-acid sequence, 31 residues long: Kallikrein-1 (31 aa).

Positions valine 1–valine 31 constitute a Peptidase S1 domain.

Belongs to the peptidase S1 family. Kallikrein subfamily.

The enzyme catalyses Preferential cleavage of Arg-|-Xaa bonds in small molecule substrates. Highly selective action to release kallidin (lysyl-bradykinin) from kininogen involves hydrolysis of Met-|-Xaa or Leu-|-Xaa.. Functionally, glandular kallikreins cleave Met-Lys and Arg-Ser bonds in kininogen to release Lys-bradykinin. The sequence is that of Kallikrein-1 from Cavia porcellus (Guinea pig).